A 110-amino-acid polypeptide reads, in one-letter code: UPF0251 protein PH0803 (110 aa).

Belongs to the UPF0251 family.

This Pyrococcus horikoshii (strain ATCC 700860 / DSM 12428 / JCM 9974 / NBRC 100139 / OT-3) protein is UPF0251 protein PH0803.